We begin with the raw amino-acid sequence, 534 residues long: GTPase Obg (534 aa).

The Obg domain occupies 2 to 159; that stretch reads ASFVDRVVLH…SDIVLELKSI (158 aa). The interval 63-82 is disordered; sequence APHRHASNGGQGMGDWRGGK. Gly residues predominate over residues 71 to 82; it reads GGQGMGDWRGGK. One can recognise an OBG-type G domain in the interval 160–343; that stretch reads ADIALVGFPS…LSFAMAELVT (184 aa). GTP-binding positions include 166–173, 191–195, 212–215, 295–298, and 324–326; these read GFPSAGKS, FTTLI, DVPG, NKID, and SAS. The Mg(2+) site is built by S173 and T193. Residues 363-449 enclose the OCT domain; the sequence is PRAVNRKEFT…ENAVVFDWEP (87 aa). The interval 456–534 is disordered; it reads ELLSGPRGTD…AASTDDGDAL (79 aa). Composition is skewed to basic and acidic residues over residues 464-504 and 512-526; these read TDPR…ERKA and SARR…REAA.

Belongs to the TRAFAC class OBG-HflX-like GTPase superfamily. OBG GTPase family. As to quaternary structure, monomer. Mg(2+) is required as a cofactor.

Its subcellular location is the cytoplasm. Its function is as follows. An essential GTPase which binds GTP, GDP and possibly (p)ppGpp with moderate affinity, with high nucleotide exchange rates and a fairly low GTP hydrolysis rate. Plays a role in control of the cell cycle, stress response, ribosome biogenesis and in those bacteria that undergo differentiation, in morphogenesis control. The protein is GTPase Obg of Renibacterium salmoninarum (strain ATCC 33209 / DSM 20767 / JCM 11484 / NBRC 15589 / NCIMB 2235).